A 127-amino-acid polypeptide reads, in one-letter code: Small integral membrane protein 33 (127 aa).

N-linked (GlcNAc...) asparagine glycosylation is present at asparagine 15. The helical transmembrane segment at 38-58 (PLLAAIIAAFVLLAICIVLAV) threads the bilayer.

Its subcellular location is the membrane. This chain is Small integral membrane protein 33, found in Mus musculus (Mouse).